Here is a 257-residue protein sequence, read N- to C-terminus: 5'-nucleotidase SurE (257 aa).

The a divalent metal cation site is built by D8, D9, S40, and N92.

Belongs to the SurE nucleotidase family. A divalent metal cation is required as a cofactor.

It is found in the cytoplasm. It carries out the reaction a ribonucleoside 5'-phosphate + H2O = a ribonucleoside + phosphate. Functionally, nucleotidase that shows phosphatase activity on nucleoside 5'-monophosphates. This Rhizobium rhizogenes (strain K84 / ATCC BAA-868) (Agrobacterium radiobacter) protein is 5'-nucleotidase SurE.